We begin with the raw amino-acid sequence, 65 residues long: Movement protein TGBp3 (65 aa).

Residues 1 to 3 are Lumenal-facing; sequence MQA. A helical transmembrane segment spans residues 4–24; sequence SGLILVALFSAVVSYLALLHL. Topologically, residues 25-65 are cytoplasmic; that stretch reads SSSSSSCVVVVTGESFRISGCDFTEEFIGFAKTLRVANSQP.

Belongs to the Tymovirales TGBp3 protein family.

It localises to the host endoplasmic reticulum membrane. Its function is as follows. Plays a role in viral cell-to-cell propagation, by facilitating genome transport to neighboring plant cells through plasmosdesmata. May induce the formation of granular vesicles derived from the Endoplasmic reticulum, which align on actin filaments. In Carnation latent virus (CLV), this protein is Movement protein TGBp3.